Here is a 291-residue protein sequence, read N- to C-terminus: Homoserine kinase (291 aa).

79–89 (PLARGLGSSSA) serves as a coordination point for ATP.

Belongs to the GHMP kinase family. Homoserine kinase subfamily.

Its subcellular location is the cytoplasm. It catalyses the reaction L-homoserine + ATP = O-phospho-L-homoserine + ADP + H(+). Its pathway is amino-acid biosynthesis; L-threonine biosynthesis; L-threonine from L-aspartate: step 4/5. Functionally, catalyzes the ATP-dependent phosphorylation of L-homoserine to L-homoserine phosphate. This is Homoserine kinase from Leuconostoc citreum (strain KM20).